The sequence spans 452 residues: uncharacterized protein (452 aa).

A run of 14 helical transmembrane segments spans residues 8-28 (AVFLTAVASGTMLNPLNSSMI), 39-59 (FHLSFTTVSWLISSFYLASAV), 77-97 (FLFGLILVAVSAIGAPFAPTF), 100-122 (LLVMRLFQSVGSSAIYPSGVGLI), 134-156 (LAVLSIFASAMTALGPTAGGFLI), 161-183 (WPAIFIVNLPFIILSFLLGLYMF), 203-222 (LGIVLFAGGIIFLLSFLLSF), 226-243 (PHAVEGVLGLLLLCAFVW), 266-286 (AVYVQFILLNVFFYCLFFGLP), 302-322 (LFMLFMSGMSIVVSPLTGKWI), 330-350 (PIFAGALLMTAGAVLLTIFFI), 359-379 (LILSLLGIGYGLGNVALQAAM), 393-415 (GLFQTCRYLGSILSSVILGILFG), and 425-447 (MMGIIMIIAGGASLLMAVRFAAL).

The protein belongs to the major facilitator superfamily.

The protein resides in the cell membrane. This is an uncharacterized protein from Bacillus subtilis (strain 168).